Here is a 242-residue protein sequence, read N- to C-terminus: RNA transcription, translation and transport factor protein (242 aa).

Belongs to the RTRAF family. Homodimer. Component of a tRNA-splicing ligase complex.

The protein resides in the nucleus. It localises to the cytoplasm. The protein localises to the cytosol. It is found in the perinuclear region. Its subcellular location is the cytoskeleton. The protein resides in the microtubule organizing center. It localises to the centrosome. Functionally, RNA-binding protein involved in modulation of mRNA transcription by Polymerase II. Component of the tRNA-splicing ligase complex. The chain is RNA transcription, translation and transport factor protein from Danio rerio (Zebrafish).